We begin with the raw amino-acid sequence, 286 residues long: Flagellin FlaB2 (286 aa).

The protein belongs to the bacterial flagellin family. In terms of assembly, the flagellum consists of an outer layer composed of repeating units of FlaA around a core that contains several antigenically related polypeptides. Interacts with FliW; a synthetic peptide of FlaB1 (residues 229-247) partially blocks binding of this protein to FliW.

Its subcellular location is the periplasmic flagellum. The protein localises to the periplasm. In terms of biological role, component of the core of the flagella. The protein is Flagellin FlaB2 of Treponema pallidum (strain Nichols).